The following is a 92-amino-acid chain: uncharacterized protein (92 aa).

One can recognise an HTH cro/C1-type domain in the interval 25–83 (LEEKLKQEKIDRKYLAQVTNIPYTTVSRIMRAEANREFNPEIDTILKIAKYFNCTMDEV). The H-T-H motif DNA-binding region spans 36-55 (RKYLAQVTNIPYTTVSRIMR).

This is an uncharacterized protein from Rickettsia prowazekii (strain Madrid E).